Consider the following 98-residue polypeptide: Plastocyanin (98 aa).

A Plastocyanin-like domain is found at 1–98; it reads AAIVKLGGDD…AGMKMTITVQ (98 aa). The Cu cation site is built by histidine 38, cysteine 83, histidine 86, and methionine 91.

The protein belongs to the plastocyanin family. Requires Cu(2+) as cofactor.

It is found in the plastid. The protein localises to the chloroplast thylakoid membrane. Its function is as follows. Participates in electron transfer between P700 and the cytochrome b6-f complex in photosystem I. The sequence is that of Plastocyanin (PETE) from Ulva prolifera (Green seaweed).